The following is a 511-amino-acid chain: DnaJ homolog 1, mitochondrial (511 aa).

A mitochondrion-targeting transit peptide spans 1–55 (MAFQQGVLSRCSGVFRHHVGHSRHINNILYRHAIAFASIAPRIPKSSFHTSAIRN). The J domain occupies 59–127 (FKDPYDTLGL…RQQYDQFGPA (69 aa)). The CR-type zinc-finger motif lies at 217 to 297 (SKNVQLRFSA…CHGEGVQVNR (81 aa)). CXXCXGXG motif repeat units lie at residues 230-237 (CSTCSGTG), 247-254 (CSTCHGTG), 269-276 (CPTCNGEG), and 285-292 (CTKCHGEG).

The protein localises to the mitochondrion. Its function is as follows. Plays a role in mitochondrial biogenesis and protein folding. In Saccharomyces cerevisiae (strain ATCC 204508 / S288c) (Baker's yeast), this protein is DnaJ homolog 1, mitochondrial (MDJ1).